The primary structure comprises 702 residues: Exodeoxyribonuclease 1 (702 aa).

The segment at 1–96 (MGIQGLLPQL…STESKRRDKR (96 aa)) is N-domain. Residues aspartate 30, aspartate 78, glutamate 150, aspartate 152, aspartate 171, aspartate 173, and aspartate 227 each contribute to the Mg(2+) site. Residues 114–247 (NAMDYFQKCV…ITAMKLVRRF (134 aa)) are I-domain. Serine 372 bears the Phosphoserine mark. Disordered regions lie at residues 465–571 (SIQD…SQRS) and 660–685 (SFNSSPILHEESKKRDIETTKSSQAR). The segment covering 474–498 (NSQSLEEPVSESQLSTQIPSSFITT) has biased composition (polar residues). 2 stretches are compositionally biased toward acidic residues: residues 500-518 (LEDDDNLSEEVSEVVSDIE) and 535-550 (NTDDDGDGDTSEDYSE). The span at 558 to 571 (TSSTTSFPGSSQRS) shows a compositional bias: low complexity. A compositionally biased stretch (basic and acidic residues) spans 667 to 678 (LHEESKKRDIET).

It belongs to the XPG/RAD2 endonuclease family. EXO1 subfamily. As to quaternary structure, interacts with mismatch repair protein MSH2. Mg(2+) is required as a cofactor.

The protein resides in the nucleus. Its activity is regulated as follows. Inactivated by calcium and zinc ions. Functionally, 5'-&gt;3' double-stranded DNA exonuclease involved in mismatch repair and eventually also in mitotic recombination between direct repeats. Also has a minor role in the correction of large DNA mismatches that occur in the heteroduplex DNA during meiotic recombination at the HIS4 locus. The sequence is that of Exodeoxyribonuclease 1 (EXO1) from Saccharomyces cerevisiae (strain ATCC 204508 / S288c) (Baker's yeast).